The primary structure comprises 393 residues: Cysteine protease ATG4B (393 aa).

At M1 the chain carries N-acetylmethionine. S34 is modified (phosphoserine; by PKB/AKT1 and PKB/AKT2). Catalysis depends on C74, which acts as the Nucleophile. C189 carries the post-translational modification S-nitrosocysteine. Active-site residues include D278 and H280. S-nitrosocysteine occurs at positions 292 and 301. A disulfide bond links C292 and C361. A Phosphoserine; by ULK1 modification is found at S316. S383 is modified (phosphoserine; by STK26). The LIR motif lies at 388–391; sequence FEIL. Phosphoserine is present on S392.

This sequence belongs to the peptidase C54 family. In terms of assembly, interacts with PFKP; promoting phosphorylation of ATG4B at Ser-34. Interacts with GBP7. Post-translationally, phosphorylation at Ser-383 and Ser-392 promotes autophagy by increasing protein delipidation activity without affecting proteolytic activation of ATG8 proteins. Phosphorylation at Ser-316 by ULK1 inhibits autophagy by decreasing both proteolytic activation and delipidation activities. Phosphorylation at Ser-316 is dephosphorylated by protein phosphatase 2A (PP2A). Phosphorylation at Ser-34 by AKT2 promotes its hydrolase activity, leading to increased proteolytic activation and delipidation of ATG8 family proteins. Phosphorylation at Ser-34 by AKT1 promotes mitochondrial localization and inhibition of the F1F0-ATP synthase activity, leading to elevation of mitochondrial reactive oxygen species (ROS). In terms of processing, ubiquitinated by RNF5, leading to its degradation by the proteasome. S-nitrosylation at Cys-189 and Cys-292 in response to high glucose decreases both proteolytic activation and delipidation activities. Post-translationally, O-glycosylated by OGT, leading to increase protease activity, thereby promoting the proteolytic activation of ATG8 family proteins. In terms of processing, forms reversible intrachain disulfide bonds in response to oxidative stress. Forms interchain disulfide bonds, leading to formation of homooligomers in response to oxidation.

The protein resides in the cytoplasm. It is found in the cytosol. It localises to the cytoplasmic vesicle. The protein localises to the autophagosome. Its subcellular location is the endoplasmic reticulum. The protein resides in the mitochondrion. It catalyses the reaction [protein]-C-terminal L-amino acid-glycyl-phosphatidylethanolamide + H2O = [protein]-C-terminal L-amino acid-glycine + a 1,2-diacyl-sn-glycero-3-phosphoethanolamine. The enzyme catalyses [protein]-C-terminal L-amino acid-glycyl-phosphatidylserine + H2O = [protein]-C-terminal L-amino acid-glycine + a 1,2-diacyl-sn-glycero-3-phospho-L-serine. Its activity is regulated as follows. Inhibited by N-ethylmaleimide. Redox-regulated during autophagy since reducing conditions activate ATG4A whereas an oxidizing environment such as the presence of H(2)O(2) inhibits its activity. The cysteine protease activity compounds is inhibited by styrylquinoline compounds 4-28 and LV-320. Cysteine protease that plays a key role in autophagy by mediating both proteolytic activation and delipidation of ATG8 family proteins. Required for canonical autophagy (macroautophagy), non-canonical autophagy as well as for mitophagy. The protease activity is required for proteolytic activation of ATG8 family proteins: cleaves the C-terminal amino acid of ATG8 proteins MAP1LC3A, MAP1LC3B, MAP1LC3C, GABARAPL1, GABARAPL2 and GABARAP, to reveal a C-terminal glycine. Exposure of the glycine at the C-terminus is essential for ATG8 proteins conjugation to phosphatidylethanolamine (PE) and insertion to membranes, which is necessary for autophagy. Protease activity is also required to counteract formation of high-molecular weight conjugates of ATG8 proteins (ATG8ylation): acts as a deubiquitinating-like enzyme that removes ATG8 conjugated to other proteins, such as ATG3. In addition to the protease activity, also mediates delipidation of ATG8 family proteins. Catalyzes delipidation of PE-conjugated forms of ATG8 proteins during macroautophagy. Also involved in non-canonical autophagy, a parallel pathway involving conjugation of ATG8 proteins to single membranes at endolysosomal compartments, by catalyzing delipidation of ATG8 proteins conjugated to phosphatidylserine (PS). Compared to other members of the family (ATG4A, ATG4C or ATG4C), constitutes the major protein for proteolytic activation of ATG8 proteins, while it displays weaker delipidation activity than other ATG4 paralogs. Involved in phagophore growth during mitophagy independently of its protease activity and of ATG8 proteins: acts by regulating ATG9A trafficking to mitochondria and promoting phagophore-endoplasmic reticulum contacts during the lipid transfer phase of mitophagy. This chain is Cysteine protease ATG4B, found in Homo sapiens (Human).